Consider the following 696-residue polypeptide: DNA-directed RNA polymerase subunit beta' (696 aa).

4 residues coordinate Zn(2+): Cys76, Cys78, Cys94, and Cys97. 3 residues coordinate Mg(2+): Asp496, Asp498, and Asp500.

The protein belongs to the RNA polymerase beta' chain family. RpoC1 subfamily. In terms of assembly, in plastids the minimal PEP RNA polymerase catalytic core is composed of four subunits: alpha, beta, beta', and beta''. When a (nuclear-encoded) sigma factor is associated with the core the holoenzyme is formed, which can initiate transcription. Mg(2+) serves as cofactor. The cofactor is Zn(2+).

It is found in the plastid. The protein resides in the chloroplast. It catalyses the reaction RNA(n) + a ribonucleoside 5'-triphosphate = RNA(n+1) + diphosphate. Functionally, DNA-dependent RNA polymerase catalyzes the transcription of DNA into RNA using the four ribonucleoside triphosphates as substrates. In Guizotia abyssinica (Niger), this protein is DNA-directed RNA polymerase subunit beta'.